The chain runs to 452 residues: UDP-N-acetylmuramate--L-alanine ligase (452 aa).

Gly110–Thr116 is an ATP binding site.

This sequence belongs to the MurCDEF family.

Its subcellular location is the cytoplasm. The enzyme catalyses UDP-N-acetyl-alpha-D-muramate + L-alanine + ATP = UDP-N-acetyl-alpha-D-muramoyl-L-alanine + ADP + phosphate + H(+). Its pathway is cell wall biogenesis; peptidoglycan biosynthesis. Its function is as follows. Cell wall formation. The protein is UDP-N-acetylmuramate--L-alanine ligase of Francisella philomiragia subsp. philomiragia (strain ATCC 25017 / CCUG 19701 / FSC 153 / O#319-036).